A 473-amino-acid chain; its full sequence is Glutamate--tRNA ligase (473 aa).

A 'HIGH' region motif is present at residues 9–19 (PSPTGYLHVGG). Positions 98, 100, 125, and 127 each coordinate Zn(2+). The 'KMSKS' region motif lies at 237–241 (KLSKR). ATP is bound at residue Lys-240.

The protein belongs to the class-I aminoacyl-tRNA synthetase family. Glutamate--tRNA ligase type 1 subfamily. In terms of assembly, monomer. The cofactor is Zn(2+).

The protein localises to the cytoplasm. The enzyme catalyses tRNA(Glu) + L-glutamate + ATP = L-glutamyl-tRNA(Glu) + AMP + diphosphate. Its function is as follows. Catalyzes the attachment of glutamate to tRNA(Glu) in a two-step reaction: glutamate is first activated by ATP to form Glu-AMP and then transferred to the acceptor end of tRNA(Glu). In Sodalis glossinidius (strain morsitans), this protein is Glutamate--tRNA ligase.